Here is a 300-residue protein sequence, read N- to C-terminus: Urease accessory protein UreD (300 aa).

The protein belongs to the UreD family. In terms of assembly, ureD, UreF and UreG form a complex that acts as a GTP-hydrolysis-dependent molecular chaperone, activating the urease apoprotein by helping to assemble the nickel containing metallocenter of UreC. The UreE protein probably delivers the nickel.

It localises to the cytoplasm. In terms of biological role, required for maturation of urease via the functional incorporation of the urease nickel metallocenter. The sequence is that of Urease accessory protein UreD from Prochlorococcus marinus (strain AS9601).